The following is a 228-amino-acid chain: Leucyl/phenylalanyl-tRNA--protein transferase (228 aa).

This sequence belongs to the L/F-transferase family.

Its subcellular location is the cytoplasm. The enzyme catalyses N-terminal L-lysyl-[protein] + L-leucyl-tRNA(Leu) = N-terminal L-leucyl-L-lysyl-[protein] + tRNA(Leu) + H(+). It carries out the reaction N-terminal L-arginyl-[protein] + L-leucyl-tRNA(Leu) = N-terminal L-leucyl-L-arginyl-[protein] + tRNA(Leu) + H(+). The catalysed reaction is L-phenylalanyl-tRNA(Phe) + an N-terminal L-alpha-aminoacyl-[protein] = an N-terminal L-phenylalanyl-L-alpha-aminoacyl-[protein] + tRNA(Phe). Functions in the N-end rule pathway of protein degradation where it conjugates Leu, Phe and, less efficiently, Met from aminoacyl-tRNAs to the N-termini of proteins containing an N-terminal arginine or lysine. The chain is Leucyl/phenylalanyl-tRNA--protein transferase from Sulfurimonas denitrificans (strain ATCC 33889 / DSM 1251) (Thiomicrospira denitrificans (strain ATCC 33889 / DSM 1251)).